The sequence spans 73 residues: Protein SlyX homolog (73 aa).

It belongs to the SlyX family.

The polypeptide is Protein SlyX homolog (Histophilus somni (strain 129Pt) (Haemophilus somnus)).